Reading from the N-terminus, the 92-residue chain is Elongation factor 1-beta (92 aa).

The protein belongs to the EF-1-beta/EF-1-delta family.

Promotes the exchange of GDP for GTP in EF-1-alpha/GDP, thus allowing the regeneration of EF-1-alpha/GTP that could then be used to form the ternary complex EF-1-alpha/GTP/AAtRNA. The protein is Elongation factor 1-beta (ef1b) of Pyrobaculum aerophilum (strain ATCC 51768 / DSM 7523 / JCM 9630 / CIP 104966 / NBRC 100827 / IM2).